The chain runs to 585 residues: Frizzled-5 (585 aa).

An N-terminal signal peptide occupies residues 1 to 26 (MARPDPSAPPSLLLLLLAQLVGRAAA). The Extracellular portion of the chain corresponds to 27–238 (ASKAPVCQEI…PDERTFATFW (212 aa)). Residues 28–150 (SKAPVCQEIT…GDAEVLCMDY (123 aa)) form the FZ domain. Intrachain disulfides connect cysteine 33/cysteine 94, cysteine 41/cysteine 87, cysteine 78/cysteine 116, cysteine 105/cysteine 147, and cysteine 109/cysteine 133. An N-linked (GlcNAc...) asparagine glycan is attached at asparagine 47. N-linked (GlcNAc...) asparagine glycosylation occurs at asparagine 151. Residues 156–182 (TTASPKSFPAKPTLPGPPGAPSSGGEC) form a disordered region. A helical membrane pass occupies residues 239–259 (IGLWSVLCFISTSTTVATFLI). Residues 260–270 (DMERFRYPERP) lie on the Cytoplasmic side of the membrane. Residues 271 to 291 (IIFLSACYLCVSLGFLVRLVV) form a helical membrane-spanning segment. At 292 to 315 (GHASVACSREHSHIHYETTGPALC) the chain is on the extracellular side. Residues 316–336 (TVVFLLVYFFGMASSIWWVIL) traverse the membrane as a helical segment. Topologically, residues 337-358 (SLTWFLAAGMKWGNEAIAGYAQ) are cytoplasmic. A helical transmembrane segment spans residues 359–379 (YFHLAAWLIPSVKSITALALS). Over 380–402 (SVDGDPVAGVCYVGNQNLNSLRG) the chain is Extracellular. A helical membrane pass occupies residues 403–423 (FVLGPLVLYLLVGTLFLLAGF). Residues 424 to 449 (VSLFRIRSVIKQGGTKTDKLEKLMIR) lie on the Cytoplasmic side of the membrane. Residues 450–470 (IGIFTLLYTVPASIVVACYLY) form a helical membrane-spanning segment. Residues 471–500 (EQHYRESWEAALTCACPGSDAGQPRAKPEY) are Extracellular-facing. A helical transmembrane segment spans residues 501–521 (WVLMLKYFMCLVVGITSGVWI). Residues 522–585 (WSGKTLESWR…YHKQVSLSHV (64 aa)) are Cytoplasmic-facing. A Lys-Thr-X-X-X-Trp motif, mediates interaction with the PDZ domain of Dvl family members motif is present at residues 525 to 530 (KTLESW). The short motif at 583–585 (SHV) is the PDZ-binding element.

This sequence belongs to the G-protein coupled receptor Fz/Smo family. As to quaternary structure, binding of unsaturated fatty acid molecules (via FZ domain) promotes homodimerization (via FZ domain). Interacts with WNT2B. Interacts with WNT7A. Interacts with GOPC. Post-translationally, ubiquitinated by RNF43 and ZNRF3, leading to its degradation by the proteasome.

The protein localises to the cell membrane. It localises to the golgi apparatus membrane. It is found in the synapse. Its subcellular location is the perikaryon. The protein resides in the cell projection. The protein localises to the dendrite. It localises to the axon. Functionally, receptor for Wnt proteins. Functions in the canonical Wnt/beta-catenin signaling pathway. In vitro activates WNT2, WNT10B, WNT5A, but not WNT2B or WNT4 signaling. In neurons, activation by WNT7A promotes formation of synapses. May be involved in transduction and intercellular transmission of polarity information during tissue morphogenesis and/or in differentiated tissues. Plays a role in yolk sac angiogenesis and in placental vascularization. Plays a role in ocular development. In Rattus norvegicus (Rat), this protein is Frizzled-5 (Fzd5).